We begin with the raw amino-acid sequence, 269 residues long: Uncharacterised methyltransferase MT1546 (269 aa).

The protein belongs to the methyltransferase superfamily.

The sequence is that of Uncharacterised methyltransferase MT1546 from Mycobacterium tuberculosis (strain CDC 1551 / Oshkosh).